Reading from the N-terminus, the 125-residue chain is Large ribosomal subunit protein bL19 (125 aa).

The protein belongs to the bacterial ribosomal protein bL19 family.

Its function is as follows. This protein is located at the 30S-50S ribosomal subunit interface and may play a role in the structure and function of the aminoacyl-tRNA binding site. This is Large ribosomal subunit protein bL19 from Wolbachia sp. subsp. Brugia malayi (strain TRS).